The chain runs to 190 residues: Ohanin (190 aa).

The first 20 residues, 1–20 (MLLFTLCFFADQENGGKALA), serve as a signal peptide directing secretion. One can recognise a B30.2/SPRY domain in the interval 21–127 (SPPGNWQKAD…RIWQKGLWWL (107 aa)). Positions 128–190 (RRLETDSDKL…IGARVSLANL (63 aa)) are excised as a propeptide.

Expressed by the venom gland.

It is found in the secreted. Neurotoxin that produces dose-dependent hypolocomotion and hyperalgesia in mice. May directly act on the central nervous system, as it is 6500-fold more potent when administered intracerebroventricularly than intraperitoneal. The protein is Ohanin of Ophiophagus hannah (King cobra).